We begin with the raw amino-acid sequence, 968 residues long: RNA polymerase-associated protein RapA (968 aa).

Positions D164–N334 constitute a Helicase ATP-binding domain. Residue D177–T184 coordinates ATP. The DEAH box signature appears at D280–H283. The Helicase C-terminal domain maps to R490 to D644.

It belongs to the SNF2/RAD54 helicase family. RapA subfamily. In terms of assembly, interacts with the RNAP. Has a higher affinity for the core RNAP than for the holoenzyme. Its ATPase activity is stimulated by binding to RNAP.

In terms of biological role, transcription regulator that activates transcription by stimulating RNA polymerase (RNAP) recycling in case of stress conditions such as supercoiled DNA or high salt concentrations. Probably acts by releasing the RNAP, when it is trapped or immobilized on tightly supercoiled DNA. Does not activate transcription on linear DNA. Probably not involved in DNA repair. This Salmonella arizonae (strain ATCC BAA-731 / CDC346-86 / RSK2980) protein is RNA polymerase-associated protein RapA.